A 1372-amino-acid chain; its full sequence is DNA-directed RNA polymerase subunit beta (1372 aa).

It belongs to the RNA polymerase beta chain family. The RNAP catalytic core consists of 2 alpha, 1 beta, 1 beta' and 1 omega subunit. When a sigma factor is associated with the core the holoenzyme is formed, which can initiate transcription.

The catalysed reaction is RNA(n) + a ribonucleoside 5'-triphosphate = RNA(n+1) + diphosphate. In terms of biological role, DNA-dependent RNA polymerase catalyzes the transcription of DNA into RNA using the four ribonucleoside triphosphates as substrates. The sequence is that of DNA-directed RNA polymerase subunit beta from Bradyrhizobium sp. (strain ORS 278).